The following is a 389-amino-acid chain: MVNVEEIRNAQRAQGPATVLAIGTSTPSNCVDQSTYPDYYFRITNSEHKTELKEKFKRMCEKSMIKKRYMHLTEEILQENPNICAYMAPSLDARQNIVVVEVPKLGKEAAQKAIKEWGQSKSKITHLVFCTTSGVDMPGADYQLTKLLGLRSSVKRLMMYQQGCFAGGTVLRLAKDLAENNKGARVLVVCSEITAVTFRGPSESHLDSLVGQALFGDGAAAIIVGSDPIPEIERPLFELVSAAQTLLPDSHGAIDGHLREVGLTFHLLKDVPGLISKNIGKALDEAFQPLGISDWNSIFWIAHPGGPAILDQVEEKLGLKPEKLRATRHVLSEYGNMSSACVLFILDEMRKASARDGLSTTGEGLEWGVLFGFGPGLTVETVVLHSVNV.

The active site involves C164.

Belongs to the thiolase-like superfamily. Chalcone/stilbene synthases family.

It carries out the reaction (E)-4-coumaroyl-CoA + 3 malonyl-CoA + 3 H(+) = 2',4,4',6'-tetrahydroxychalcone + 3 CO2 + 4 CoA. It participates in secondary metabolite biosynthesis; flavonoid biosynthesis. The primary product of this enzyme is 4,2',4',6'-tetrahydroxychalcone (also termed naringenin-chalcone or chalcone) which can under specific conditions spontaneously isomerize into naringenin. This is Chalcone synthase (CHS) from Catharanthus roseus (Madagascar periwinkle).